Here is a 148-residue protein sequence, read N- to C-terminus: Transcriptional regulator MraZ (148 aa).

SpoVT-AbrB domains lie at 7–56 and 85–128; these read KERH…EPDI and LDVV…APER.

It belongs to the MraZ family. In terms of assembly, forms oligomers.

The protein resides in the cytoplasm. It is found in the nucleoid. This Chlorobium phaeobacteroides (strain DSM 266 / SMG 266 / 2430) protein is Transcriptional regulator MraZ.